The primary structure comprises 223 residues: MIVFGLSGGAGSGKSTVAAMFAQSCNAAVFDADKIVHSMYSGDAIITGLVAKYFPDCICNGVVSRERLSKHFFSYGPLWLEFQSILHSIVLRQQRKFILEQGKIGRDYAVLDVPLLLEAGFWRCCDFVINVDVHKSLQWHRLRQRGLSEREIEFLLSLQMPRGSRRNFADFYVNCGGRKGEVLKSVLQIVGSLNAGRHRFRVARKKLAMRSALDRRASTMASA.

The DPCK domain occupies 3 to 204 (VFGLSGGAGS…AGRHRFRVAR (202 aa)). 11 to 16 (GSGKST) serves as a coordination point for ATP.

It belongs to the CoaE family.

It is found in the cytoplasm. The enzyme catalyses 3'-dephospho-CoA + ATP = ADP + CoA + H(+). Its pathway is cofactor biosynthesis; coenzyme A biosynthesis; CoA from (R)-pantothenate: step 5/5. Catalyzes the phosphorylation of the 3'-hydroxyl group of dephosphocoenzyme A to form coenzyme A. This Anaplasma marginale (strain St. Maries) protein is Dephospho-CoA kinase.